Reading from the N-terminus, the 440-residue chain is MRLSRYFLPILREVPKEADIVSHRLMLRAGMIRQESAGIYAWLPLGLRVLNKICNIIREEQNRTGAVELLMPTIQSADLWRESGRYDDYGKEMLRIKDRHERDMLFGPTNEEMITEIVRGSIKSYKSLPLNLYHIQWKFRDEVRPRFGVYRSREFLMKDAYSFDLDAEGAKHSYNKMFVAYLRTFARMGLKAIPMVADTGPIGGNLSHEFIILASTGESEVFCHGDYLEMAPPPADVNFDDAAAIQQVVNDWTTLYAATEEKHDAATFAAIPAERQMAARGIEVGHIFYFGTKYSAPFNAKVLGPDGAEHLIHMGSYGIGPSRLVAAMIEASHDDAGIIWPDAVAPFQVGILNLKVGDSAVDAACADLYAKLTAAGVDVLYDDTDERAGSKFATADLIGLPWQILVGPKSLADGKVELKRRVDGSRELVTPAEAFERLKG.

Belongs to the class-II aminoacyl-tRNA synthetase family. ProS type 2 subfamily. Homodimer.

The protein resides in the cytoplasm. It catalyses the reaction tRNA(Pro) + L-proline + ATP = L-prolyl-tRNA(Pro) + AMP + diphosphate. Its function is as follows. Catalyzes the attachment of proline to tRNA(Pro) in a two-step reaction: proline is first activated by ATP to form Pro-AMP and then transferred to the acceptor end of tRNA(Pro). The sequence is that of Proline--tRNA ligase from Azorhizobium caulinodans (strain ATCC 43989 / DSM 5975 / JCM 20966 / LMG 6465 / NBRC 14845 / NCIMB 13405 / ORS 571).